We begin with the raw amino-acid sequence, 201 residues long: MKNPIIDNIPCVLLAGGKSSRFITNNIQTNKALMPLKSYSSLLEYQYTRLLKLFKKVIISTKKSYELNAPYLLEKESDLFSPLFGIHNAFLTLQTPYIFFIPIDTPLVSFESIKALCGIKNFSVVYAKSPTKEHYLISLWHQSTLNALNYALKTQNYRLSDLIKNASSTAIHFDKEEEFLNLNTLKDYELAVQILKEGSNG.

GTP contacts are provided by residues 14–16 (LAG), lysine 31, and aspartate 104. Aspartate 104 lines the Mg(2+) pocket.

It belongs to the MobA family. As to quaternary structure, monomer. It depends on Mg(2+) as a cofactor.

It is found in the cytoplasm. The enzyme catalyses Mo-molybdopterin + GTP + H(+) = Mo-molybdopterin guanine dinucleotide + diphosphate. Transfers a GMP moiety from GTP to Mo-molybdopterin (Mo-MPT) cofactor (Moco or molybdenum cofactor) to form Mo-molybdopterin guanine dinucleotide (Mo-MGD) cofactor. The protein is Molybdenum cofactor guanylyltransferase of Helicobacter pylori (strain G27).